The primary structure comprises 340 residues: MQYKNQNLTHFVKAAGUAAKLSPGGLKTILNFMQKTPALLSDIGNNEDASVYQISRDLALVQTLDFITPIVDSAYHFGAIAAANALSDVFAMGAEVINALNIVGFDTCNHDVNILKELLEGANDKVQECNALVVGGHTIESTELFFGLSVTGKVHPSKFIANNTSKIGDCIILTKPLGTGILSTALKAQMLNQKHLDIMLKNMMELNYKASQIALKFHPSAMSDVTGFGLLGHLKEMLNKNISFEIFQNEILFLEGAKEYFNMGLIPAGAYKNLEFIKELIPDLNEEKLLLCDPQTSGGLLISISEKESLECLKKLEDENIQAKIIAKVVNKQENDIIIS.

Residue U17 is part of the active site. A non-standard amino acid (selenocysteine) is located at residue U17. Residues K20 and 45–47 (NNE) contribute to the ATP site. D48 lines the Mg(2+) pocket. ATP is bound by residues D65, D88, and 136 to 138 (GHT). D88 is a binding site for Mg(2+). A Mg(2+)-binding site is contributed by D224.

Belongs to the selenophosphate synthase 1 family. Class I subfamily. As to quaternary structure, homodimer. Requires Mg(2+) as cofactor.

It catalyses the reaction hydrogenselenide + ATP + H2O = selenophosphate + AMP + phosphate + 2 H(+). Functionally, synthesizes selenophosphate from selenide and ATP. This chain is Selenide, water dikinase, found in Campylobacter jejuni (strain RM1221).